The primary structure comprises 166 residues: Putative esterase sll0410 (166 aa).

Aspartate 45 is an active-site residue.

This sequence belongs to the 4-hydroxybenzoyl-CoA thioesterase family.

The sequence is that of Putative esterase sll0410 from Synechocystis sp. (strain ATCC 27184 / PCC 6803 / Kazusa).